We begin with the raw amino-acid sequence, 322 residues long: tRNA-modifying protein YgfZ (322 aa).

W182 contacts folate.

Belongs to the tRNA-modifying YgfZ family.

Its subcellular location is the cytoplasm. In terms of biological role, folate-binding protein involved in regulating the level of ATP-DnaA and in the modification of some tRNAs. It is probably a key factor in regulatory networks that act via tRNA modification, such as initiation of chromosomal replication. The sequence is that of tRNA-modifying protein YgfZ from Vibrio parahaemolyticus serotype O3:K6 (strain RIMD 2210633).